We begin with the raw amino-acid sequence, 498 residues long: ATP synthase subunit beta, chloroplastic (498 aa).

172 to 179 (GGAGVGKT) serves as a coordination point for ATP.

This sequence belongs to the ATPase alpha/beta chains family. As to quaternary structure, F-type ATPases have 2 components, CF(1) - the catalytic core - and CF(0) - the membrane proton channel. CF(1) has five subunits: alpha(3), beta(3), gamma(1), delta(1), epsilon(1). CF(0) has four main subunits: a(1), b(1), b'(1) and c(9-12).

The protein resides in the plastid. Its subcellular location is the chloroplast thylakoid membrane. It carries out the reaction ATP + H2O + 4 H(+)(in) = ADP + phosphate + 5 H(+)(out). Functionally, produces ATP from ADP in the presence of a proton gradient across the membrane. The catalytic sites are hosted primarily by the beta subunits. This chain is ATP synthase subunit beta, chloroplastic, found in Hyophorbe lagenicaulis (Bottle palm).